Reading from the N-terminus, the 360-residue chain is CCA-adding enzyme (360 aa).

The ATP site is built by Gly-8 and Arg-11. CTP contacts are provided by Gly-8 and Arg-11. Asp-21 and Asp-23 together coordinate Mg(2+). ATP contacts are provided by Arg-91, Arg-137, and Arg-140. The CTP site is built by Arg-91, Arg-137, and Arg-140.

Belongs to the tRNA nucleotidyltransferase/poly(A) polymerase family. Bacterial CCA-adding enzyme type 2 subfamily. The cofactor is Mg(2+).

The catalysed reaction is a tRNA precursor + 2 CTP + ATP = a tRNA with a 3' CCA end + 3 diphosphate. It carries out the reaction a tRNA with a 3' CCA end + 2 CTP + ATP = a tRNA with a 3' CCACCA end + 3 diphosphate. Its function is as follows. Catalyzes the addition and repair of the essential 3'-terminal CCA sequence in tRNAs without using a nucleic acid template. Adds these three nucleotides in the order of C, C, and A to the tRNA nucleotide-73, using CTP and ATP as substrates and producing inorganic pyrophosphate. tRNA 3'-terminal CCA addition is required both for tRNA processing and repair. Also involved in tRNA surveillance by mediating tandem CCA addition to generate a CCACCA at the 3' terminus of unstable tRNAs. While stable tRNAs receive only 3'-terminal CCA, unstable tRNAs are marked with CCACCA and rapidly degraded. In Francisella tularensis subsp. tularensis (strain FSC 198), this protein is CCA-adding enzyme.